Consider the following 104-residue polypeptide: UPF0145 protein DET1617 (104 aa).

Belongs to the UPF0145 family.

In Dehalococcoides mccartyi (strain ATCC BAA-2266 / KCTC 15142 / 195) (Dehalococcoides ethenogenes (strain 195)), this protein is UPF0145 protein DET1617.